A 239-amino-acid polypeptide reads, in one-letter code: Chlorate reductase subunit gamma (239 aa).

A signal peptide spans 1-27 (MKTNILVKRMAVIGLAVAAACTGAAAA). 2 residues coordinate heme b: His-74 and Met-138.

In terms of assembly, heterotrimer of alpha, beta and gamma subunits. The cofactor is heme b.

It is found in the periplasm. Functionally, may transfer electrons to the iron-sulfur centers of ClrB. This chain is Chlorate reductase subunit gamma (clrC), found in Ideonella dechloratans.